A 212-amino-acid polypeptide reads, in one-letter code: Protein-L-isoaspartate O-methyltransferase (212 aa).

S60 is a catalytic residue.

It belongs to the methyltransferase superfamily. L-isoaspartyl/D-aspartyl protein methyltransferase family.

It localises to the cytoplasm. The catalysed reaction is [protein]-L-isoaspartate + S-adenosyl-L-methionine = [protein]-L-isoaspartate alpha-methyl ester + S-adenosyl-L-homocysteine. Functionally, catalyzes the methyl esterification of L-isoaspartyl residues in peptides and proteins that result from spontaneous decomposition of normal L-aspartyl and L-asparaginyl residues. It plays a role in the repair and/or degradation of damaged proteins. The sequence is that of Protein-L-isoaspartate O-methyltransferase from Pseudomonas putida (strain W619).